Consider the following 2153-residue polypeptide: RNA-directed RNA polymerase L (2153 aa).

Residues histidine 36, glutamate 54, aspartate 97, glutamate 110, and valine 111 each contribute to the Mn(2+) site. Lysine 124 serves as the catalytic For endonuclease activity. A RdRp catalytic domain is found at 957–1143 (TGKKIRFKRK…AVNQEMWKSM (187 aa)). Aspartate 1100 contacts Mg(2+).

It belongs to the Bunyavirales RNA polymerase family. In terms of assembly, interacts with the viral nucleoprotein. It depends on Mn(2+) as a cofactor. The cofactor is Mg(2+).

It is found in the host cytoplasm. The protein resides in the host perinuclear region. The catalysed reaction is RNA(n) + a ribonucleoside 5'-triphosphate = RNA(n+1) + diphosphate. Functionally, RNA-dependent RNA polymerase, which is responsible for the replication and transcription of the viral RNA genome using antigenomic RNA as an intermediate. During transcription, synthesizes subgenomic RNAs and assures their capping by a cap-snatching mechanism, which involves the endonuclease activity cleaving the host capped pre-mRNAs. These short capped RNAs are then used as primers for viral transcription. Cleaves ssRNA substrates but not DNA. Seems to downregulate the expression of its own and heterologous mRNAs through its endonuclease activity. This Black Creek Canal orthohantavirus (BCCV) protein is RNA-directed RNA polymerase L.